Here is a 360-residue protein sequence, read N- to C-terminus: Bifunctional protein FolD 4, chloroplastic (360 aa).

Residues 1–51 (MASMMFTDCSSTTTSRLIHLNRSSGTFLLRQCVGQLRLQTTASGRGCCIRS) constitute a chloroplast transit peptide. Ser52 carries the N-acetylserine modification.

Belongs to the tetrahydrofolate dehydrogenase/cyclohydrolase family. Homodimer.

It is found in the plastid. Its subcellular location is the chloroplast. It catalyses the reaction (6R)-5,10-methylene-5,6,7,8-tetrahydrofolate + NADP(+) = (6R)-5,10-methenyltetrahydrofolate + NADPH. The catalysed reaction is (6R)-5,10-methenyltetrahydrofolate + H2O = (6R)-10-formyltetrahydrofolate + H(+). It functions in the pathway one-carbon metabolism; tetrahydrofolate interconversion. In terms of biological role, catalyzes the oxidation of 5,10-methylenetetrahydrofolate to 5,10-methenyltetrahydrofolate and then the hydrolysis of 5,10-methenyltetrahydrofolate to 10-formyltetrahydrofolate. This is Bifunctional protein FolD 4, chloroplastic (FOLD4) from Arabidopsis thaliana (Mouse-ear cress).